A 157-amino-acid polypeptide reads, in one-letter code: Small ribosomal subunit protein uS7 (157 aa).

Belongs to the universal ribosomal protein uS7 family. Part of the 30S ribosomal subunit. Contacts proteins S9 and S11.

Functionally, one of the primary rRNA binding proteins, it binds directly to 16S rRNA where it nucleates assembly of the head domain of the 30S subunit. Is located at the subunit interface close to the decoding center, probably blocks exit of the E-site tRNA. The chain is Small ribosomal subunit protein uS7 from Albidiferax ferrireducens (strain ATCC BAA-621 / DSM 15236 / T118) (Rhodoferax ferrireducens).